Reading from the N-terminus, the 391-residue chain is Stearoyl-[acyl-carrier-protein] 9-desaturase 6, chloroplastic (391 aa).

The transit peptide at 1 to 38 (MLAHKSLLSFTTQWATLMPSPSTFLASRPRGPAKISAV) directs the protein to the chloroplast. Glu-130, Glu-168, His-171, Glu-221, Glu-254, and His-257 together coordinate Fe cation.

The protein belongs to the fatty acid desaturase type 2 family. Homodimer. Requires Fe(2+) as cofactor.

The protein resides in the plastid. It localises to the chloroplast. The enzyme catalyses octadecanoyl-[ACP] + 2 reduced [2Fe-2S]-[ferredoxin] + O2 + 2 H(+) = (9Z)-octadecenoyl-[ACP] + 2 oxidized [2Fe-2S]-[ferredoxin] + 2 H2O. The protein operates within lipid metabolism; fatty acid metabolism. In terms of biological role, converts stearoyl-ACP to oleoyl-ACP by introduction of a cis double bond between carbons 9 and 10 of the acyl chain. This Arabidopsis thaliana (Mouse-ear cress) protein is Stearoyl-[acyl-carrier-protein] 9-desaturase 6, chloroplastic (S-ACP-DES6).